A 78-amino-acid polypeptide reads, in one-letter code: Small ribosomal subunit protein bS18B (78 aa).

The disordered stretch occupies residues 1-22; sequence MPRKPVRKVASTPRPNPLDQNG.

It belongs to the bacterial ribosomal protein bS18 family. Part of the 30S ribosomal subunit. Forms a tight heterodimer with protein bS6.

Functionally, binds as a heterodimer with protein bS6 to the central domain of the 16S rRNA, where it helps stabilize the platform of the 30S subunit. The polypeptide is Small ribosomal subunit protein bS18B (Streptomyces avermitilis (strain ATCC 31267 / DSM 46492 / JCM 5070 / NBRC 14893 / NCIMB 12804 / NRRL 8165 / MA-4680)).